Reading from the N-terminus, the 755-residue chain is Beta-galactosidase (755 aa).

The active-site Proton donor is the Glu382. Glu463 acts as the Nucleophile in catalysis.

Belongs to the glycosyl hydrolase 2 family.

It carries out the reaction Hydrolysis of terminal non-reducing beta-D-galactose residues in beta-D-galactosides.. The sequence is that of Beta-galactosidase (lacZ) from Rhizobium meliloti (Ensifer meliloti).